A 145-amino-acid polypeptide reads, in one-letter code: NADH-ubiquinone oxidoreductase subunit 8 (145 aa).

2 4Fe-4S ferredoxin-type domains span residues 43–73 (LRFY…VRVG) and 83–112 (DWFT…HSLF). C53, C56, C59, C63, C92, C95, C98, and C102 together coordinate [4Fe-4S] cluster.

Belongs to the complex I 23 kDa subunit family. It depends on [4Fe-4S] cluster as a cofactor.

Its subcellular location is the mitochondrion. The catalysed reaction is a ubiquinone + NADH + 5 H(+)(in) = a ubiquinol + NAD(+) + 4 H(+)(out). Functionally, core subunit of the mitochondrial membrane respiratory chain NADH dehydrogenase (Complex I) that is believed to belong to the minimal assembly required for catalysis. Complex I functions in the transfer of electrons from NADH to the respiratory chain. The immediate electron acceptor for the enzyme is believed to be ubiquinone. May donate electrons to ubiquinone. The chain is NADH-ubiquinone oxidoreductase subunit 8 (M-ISP1) from Trypanosoma brucei brucei.